The following is a 179-amino-acid chain: NADH-quinone oxidoreductase subunit B (179 aa).

Residues Cys35, Cys36, Cys100, and Cys129 each contribute to the [4Fe-4S] cluster site.

The protein belongs to the complex I 20 kDa subunit family. As to quaternary structure, NDH-1 is composed of 14 different subunits. Subunits NuoB, C, D, E, F, and G constitute the peripheral sector of the complex. [4Fe-4S] cluster is required as a cofactor.

It localises to the cell inner membrane. The catalysed reaction is a quinone + NADH + 5 H(+)(in) = a quinol + NAD(+) + 4 H(+)(out). Functionally, NDH-1 shuttles electrons from NADH, via FMN and iron-sulfur (Fe-S) centers, to quinones in the respiratory chain. Couples the redox reaction to proton translocation (for every two electrons transferred, four hydrogen ions are translocated across the cytoplasmic membrane), and thus conserves the redox energy in a proton gradient. This chain is NADH-quinone oxidoreductase subunit B, found in Aquifex aeolicus (strain VF5).